The following is a 98-amino-acid chain: NADH-ubiquinone oxidoreductase chain 4L (98 aa).

A run of 3 helical transmembrane segments spans residues 1–21 (MPFI…GLLI), 29–49 (SLLC…LMTL), and 61–81 (IVLL…LVLI).

Belongs to the complex I subunit 4L family. In terms of assembly, core subunit of respiratory chain NADH dehydrogenase (Complex I) which is composed of 45 different subunits.

The protein localises to the mitochondrion inner membrane. The enzyme catalyses a ubiquinone + NADH + 5 H(+)(in) = a ubiquinol + NAD(+) + 4 H(+)(out). Core subunit of the mitochondrial membrane respiratory chain NADH dehydrogenase (Complex I) which catalyzes electron transfer from NADH through the respiratory chain, using ubiquinone as an electron acceptor. Part of the enzyme membrane arm which is embedded in the lipid bilayer and involved in proton translocation. This Aotus trivirgatus (Three-striped night monkey) protein is NADH-ubiquinone oxidoreductase chain 4L (MT-ND4L).